The following is a 119-amino-acid chain: Large ribosomal subunit protein bL20 (119 aa).

The protein belongs to the bacterial ribosomal protein bL20 family.

Its function is as follows. Binds directly to 23S ribosomal RNA and is necessary for the in vitro assembly process of the 50S ribosomal subunit. It is not involved in the protein synthesizing functions of that subunit. In Dichelobacter nodosus (strain VCS1703A), this protein is Large ribosomal subunit protein bL20.